Here is a 159-residue protein sequence, read N- to C-terminus: Protransforming growth factor alpha (159 aa).

An N-terminal signal peptide occupies residues 1–23; that stretch reads MVPAAGQLALLALGILVAVCQAL. A propeptide spans 24–38 (removed in mature form); it reads ENSTSPLSDSPVAAA. Residues 24–97 lie on the Extracellular side of the membrane; the sequence is ENSTSPLSDS…AVVAASQKKQ (74 aa). A glycan (N-linked (GlcNAc...) asparagine) is linked at N25. The EGF-like domain occupies 42–82; sequence HFNKCPDSHTQYCFHGTCRFLVQEEKPACVCHSGYVGVRCE. Intrachain disulfides connect C46/C59, C54/C70, and C72/C81. Positions 89–159 are cleaved as a propeptide — removed in mature form; the sequence is VVAASQKKQA…TACCHSETVV (71 aa). A helical membrane pass occupies residues 98–123; that stretch reads AITALVVVSIVALAVLIITCVLIHCC. The Cytoplasmic portion of the chain corresponds to 124–159; that stretch reads QVRKHCEWCRALVCRHEKPSALLKGRTACCHSETVV. 2 S-palmitoyl cysteine lipidation sites follow: C152 and C153.

Interacts with the PDZ domains of MAGI3, SDCBP and SNTA1. The interaction with SDCBP, is required for the targeting to the cell surface. In the endoplasmic reticulum, in its immature form (i.e. with a prosegment and lacking full N-glycosylation), interacts with CNIH. In the Golgi apparatus, may form a complex with CNIH and GORASP2. Interacts (via cytoplasmic C-terminal domain) with NKD2.

The protein localises to the secreted. It localises to the extracellular space. It is found in the cell membrane. Its function is as follows. TGF alpha is a mitogenic polypeptide that is able to bind to the EGF receptor/EGFR and to act synergistically with TGF beta to promote anchorage-independent cell proliferation in soft agar. In Rattus norvegicus (Rat), this protein is Protransforming growth factor alpha (Tgfa).